The sequence spans 270 residues: Myelin protein zero-like protein 1 (270 aa).

An N-terminal signal peptide occupies residues 1–35; the sequence is MAEAVGAVALIAAPARRRWLWSVLAAMLGLLTARI. The 116-residue stretch at 36–151 folds into the Ig-like V-type domain; it reads SALEVHTPKE…DIVVRPGHIR (116 aa). The Extracellular portion of the chain corresponds to 36–162; the sequence is SALEVHTPKE…HVVEIDNLLV (127 aa). N-linked (GlcNAc...) asparagine glycans are attached at residues asparagine 50 and asparagine 130. A disulfide bridge links cysteine 58 with cysteine 135. The helical transmembrane segment at 163–183 threads the bilayer; it reads FLVWVVVGTVTAVVLGLTLLI. At 184 to 270 the chain is on the cytoplasmic side; it reads SLVLVVLYRR…SVVYADIRKD (87 aa). Residues 201–257 form a disordered region; sequence TGCSTSERLSPVKQAPRKCPSDTEGLVKSPPSAGSHQGPVIYAQLDHSGGHHSGKIN. Residues serine 204, serine 206, serine 210, and serine 221 each carry the phosphoserine modification. The ITIM motif 1 signature appears at 240–245; that stretch reads VIYAQL. At tyrosine 242 the chain carries Phosphotyrosine. Serine 261 carries the post-translational modification Phosphoserine. The short motif at 262–267 is the ITIM motif 2 element; it reads VVYADI. A Phosphotyrosine modification is found at tyrosine 264.

This sequence belongs to the myelin P0 protein family. In terms of assembly, interacts with phosphorylated PTPN11/SHP-2. Phosphorylated on tyrosine residues upon stimulation with pervanadate and concanavalin-A (ConA). Phosphorylation at Tyr-242 and Tyr-264 is required for interaction with PTPN11/SHP-2. Dephosphorylated by PTPN11/SHP-2 (in vitro).

It is found in the membrane. Cell surface receptor, which is involved in signal transduction processes. Recruits PTPN11/SHP-2 to the cell membrane and is a putative substrate of PTPN11/SHP-2. Is a major receptor for concanavalin-A (ConA) and is involved in cellular signaling induced by ConA, which probably includes Src family tyrosine-protein kinases. Isoform 2 seems to have a dominant negative role; it blocks tyrosine phosphorylation of MPZL1 induced by ConA. Isoform 1, but not isoform 2, may be involved in regulation of integrin-mediated cell motility. This is Myelin protein zero-like protein 1 (Mpzl1) from Mus musculus (Mouse).